The chain runs to 273 residues: Putative phosphoenolpyruvate synthase regulatory protein (273 aa).

153-160 serves as a coordination point for ADP; the sequence is AVSRAGKT.

The protein belongs to the pyruvate, phosphate/water dikinase regulatory protein family. PSRP subfamily.

It catalyses the reaction [pyruvate, water dikinase] + ADP = [pyruvate, water dikinase]-phosphate + AMP + H(+). The enzyme catalyses [pyruvate, water dikinase]-phosphate + phosphate + H(+) = [pyruvate, water dikinase] + diphosphate. Bifunctional serine/threonine kinase and phosphorylase involved in the regulation of the phosphoenolpyruvate synthase (PEPS) by catalyzing its phosphorylation/dephosphorylation. In Xanthomonas oryzae pv. oryzae (strain MAFF 311018), this protein is Putative phosphoenolpyruvate synthase regulatory protein.